A 201-amino-acid chain; its full sequence is Glycerol-3-phosphate acyltransferase (201 aa).

A run of 5 helical transmembrane segments spans residues L5–V25, K55–A75, W88–F108, L118–V138, and T164–L184.

The protein belongs to the PlsY family. As to quaternary structure, probably interacts with PlsX.

Its subcellular location is the cell inner membrane. The enzyme catalyses an acyl phosphate + sn-glycerol 3-phosphate = a 1-acyl-sn-glycero-3-phosphate + phosphate. Its pathway is lipid metabolism; phospholipid metabolism. Its function is as follows. Catalyzes the transfer of an acyl group from acyl-phosphate (acyl-PO(4)) to glycerol-3-phosphate (G3P) to form lysophosphatidic acid (LPA). This enzyme utilizes acyl-phosphate as fatty acyl donor, but not acyl-CoA or acyl-ACP. This Anaeromyxobacter dehalogenans (strain 2CP-C) protein is Glycerol-3-phosphate acyltransferase.